The following is a 288-amino-acid chain: Acetylglutamate kinase (288 aa).

Substrate-binding positions include 73–74 (GG), Arg95, and Asn186.

This sequence belongs to the acetylglutamate kinase family. ArgB subfamily.

It is found in the cytoplasm. The catalysed reaction is N-acetyl-L-glutamate + ATP = N-acetyl-L-glutamyl 5-phosphate + ADP. The protein operates within amino-acid biosynthesis; L-arginine biosynthesis; N(2)-acetyl-L-ornithine from L-glutamate: step 2/4. Functionally, catalyzes the ATP-dependent phosphorylation of N-acetyl-L-glutamate. This chain is Acetylglutamate kinase, found in Pelagibacter ubique (strain HTCC1062).